Here is a 272-residue protein sequence, read N- to C-terminus: Acyl-[acyl-carrier-protein]--UDP-N-acetylglucosamine O-acyltransferase (272 aa).

This sequence belongs to the transferase hexapeptide repeat family. LpxA subfamily. As to quaternary structure, homotrimer.

The protein resides in the cytoplasm. It catalyses the reaction a (3R)-hydroxyacyl-[ACP] + UDP-N-acetyl-alpha-D-glucosamine = a UDP-3-O-[(3R)-3-hydroxyacyl]-N-acetyl-alpha-D-glucosamine + holo-[ACP]. Its pathway is glycolipid biosynthesis; lipid IV(A) biosynthesis; lipid IV(A) from (3R)-3-hydroxytetradecanoyl-[acyl-carrier-protein] and UDP-N-acetyl-alpha-D-glucosamine: step 1/6. Involved in the biosynthesis of lipid A, a phosphorylated glycolipid that anchors the lipopolysaccharide to the outer membrane of the cell. This chain is Acyl-[acyl-carrier-protein]--UDP-N-acetylglucosamine O-acyltransferase, found in Rhizobium leguminosarum bv. trifolii (strain WSM2304).